Here is a 547-residue protein sequence, read N- to C-terminus: Large cysteine-rich periplasmic protein OmcB, serovar E (547 aa).

Residues 1-22 form the signal peptide; sequence MNKLIRRAVTIFAVTSVASLFA. Positions 23-40 are excised as a propeptide; it reads SGVLETSMAESLSTNVIS. The disordered stretch occupies residues 46–83; the sequence is AKDNTSHKSKKARKNHSKETLVDRKEVAPVHESKATGP. Residues 52-61 show a composition bias toward basic residues; the sequence is HKSKKARKNH. Basic and acidic residues predominate over residues 62–79; sequence SKETLVDRKEVAPVHESK.

In terms of assembly, part of a disulfide cross-linked outer membrane complex (COMC) composed of the major outer membrane porin (MOMP), the small cysteine-rich protein (OmcA) and the large cysteine-rich periplasmic protein (OmcB).

The protein localises to the periplasm. Functionally, in elementary bodies (EBs, the infectious stage, which is able to survive outside the host cell) provides the structural integrity of the outer envelope through disulfide cross-links with the small cysteine-rich protein and the major outer membrane protein. It has been described in publications as the Sarkosyl-insoluble COMC (Chlamydia outer membrane complex), and serves as the functional equivalent of peptidoglycan. This chain is Large cysteine-rich periplasmic protein OmcB, serovar E (omcB), found in Chlamydia trachomatis.